The following is a 182-amino-acid chain: Gas vesicle protein H1 (182 aa).

The segment covering 1–11 (MVPDENDDASD) has biased composition (acidic residues). Disordered stretches follow at residues 1–21 (MVPD…SGLL) and 65–106 (GRAD…GGTS). Low complexity predominate over residues 12 to 21 (DQSSQLSGLL). The segment covering 92-101 (TTEDSIHVET) has biased composition (basic and acidic residues).

It belongs to the gas vesicle GvpH family. As to quaternary structure, gvpF to GvpM interact with each other in vitro, and may form multi-subunit complex(es). Interacts with GvpC1. Might interact with GvpA1.

The protein resides in the cytoplasm. It is found in the gas vesicle. Functionally, proteins GvpF to GvpM might be involved in nucleating gas vesicle formation. May be important for the stability of gas vesicles. Gas vesicles are hollow, gas filled proteinaceous nanostructures found in several microbial planktonic microorganisms. They allow positioning of halobacteria at the optimal depth for growth in the poorly aerated, shallow brine pools of their habitat. Expression of a 9.5 kb p-vac DNA fragment containing 2 divergently transcribed regions (gvpD-gvpE-gvpF-gvpG-gvpH-gvpI-gvpJ-gvpK-gvpL-gvpM and gvpA-gvpC-gvpN-gvpO) allows H.volcanii to produce gas vesicles. A similar region restores gas vesicle production in H.halobium without the p-vac locus, but it still has the c-vac locus. The protein is Gas vesicle protein H1 (gvpH11) of Halobacterium salinarum (strain ATCC 700922 / JCM 11081 / NRC-1) (Halobacterium halobium).